The sequence spans 227 residues: Cytochrome c oxidase subunit 2 (227 aa).

The Mitochondrial intermembrane portion of the chain corresponds to 1–14 (MAYPFELGFQDATS). Residues 15–45 (PIMEELLHFHDHTLMIVFLISSLVLYIISLM) form a helical membrane-spanning segment. Topologically, residues 46-59 (LTTKLTHTSTMDAQ) are mitochondrial matrix. Residues 60 to 87 (EVETIWTILPAIILILIALPSLRILYMM) form a helical membrane-spanning segment. Topologically, residues 88–227 (DEINDPSLTV…HFENWSSSML (140 aa)) are mitochondrial intermembrane. 6 residues coordinate Cu cation: His-161, Cys-196, Glu-198, Cys-200, His-204, and Met-207. Glu-198 provides a ligand contact to Mg(2+).

This sequence belongs to the cytochrome c oxidase subunit 2 family. In terms of assembly, component of the cytochrome c oxidase (complex IV, CIV), a multisubunit enzyme composed of 14 subunits. The complex is composed of a catalytic core of 3 subunits MT-CO1, MT-CO2 and MT-CO3, encoded in the mitochondrial DNA, and 11 supernumerary subunits COX4I, COX5A, COX5B, COX6A, COX6B, COX6C, COX7A, COX7B, COX7C, COX8 and NDUFA4, which are encoded in the nuclear genome. The complex exists as a monomer or a dimer and forms supercomplexes (SCs) in the inner mitochondrial membrane with NADH-ubiquinone oxidoreductase (complex I, CI) and ubiquinol-cytochrome c oxidoreductase (cytochrome b-c1 complex, complex III, CIII), resulting in different assemblies (supercomplex SCI(1)III(2)IV(1) and megacomplex MCI(2)III(2)IV(2)). Found in a complex with TMEM177, COA6, COX18, COX20, SCO1 and SCO2. Interacts with TMEM177 in a COX20-dependent manner. Interacts with COX20. Interacts with COX16. The cofactor is Cu cation.

It localises to the mitochondrion inner membrane. It catalyses the reaction 4 Fe(II)-[cytochrome c] + O2 + 8 H(+)(in) = 4 Fe(III)-[cytochrome c] + 2 H2O + 4 H(+)(out). Its function is as follows. Component of the cytochrome c oxidase, the last enzyme in the mitochondrial electron transport chain which drives oxidative phosphorylation. The respiratory chain contains 3 multisubunit complexes succinate dehydrogenase (complex II, CII), ubiquinol-cytochrome c oxidoreductase (cytochrome b-c1 complex, complex III, CIII) and cytochrome c oxidase (complex IV, CIV), that cooperate to transfer electrons derived from NADH and succinate to molecular oxygen, creating an electrochemical gradient over the inner membrane that drives transmembrane transport and the ATP synthase. Cytochrome c oxidase is the component of the respiratory chain that catalyzes the reduction of oxygen to water. Electrons originating from reduced cytochrome c in the intermembrane space (IMS) are transferred via the dinuclear copper A center (CU(A)) of subunit 2 and heme A of subunit 1 to the active site in subunit 1, a binuclear center (BNC) formed by heme A3 and copper B (CU(B)). The BNC reduces molecular oxygen to 2 water molecules using 4 electrons from cytochrome c in the IMS and 4 protons from the mitochondrial matrix. The sequence is that of Cytochrome c oxidase subunit 2 (MT-CO2) from Tamias merriami (Merriam's chipmunk).